The sequence spans 624 residues: Cell pattern formation-associated protein ust1 (624 aa).

Disordered stretches follow at residues 1-24 and 43-99; these read MSTA…APTG and RSGS…GHSS. Residues 43–62 show a composition bias toward low complexity; that stretch reads RSGSVPASASGSAPGSASGS. Residues 70 to 85 show a composition bias toward basic residues; that stretch reads QHHTGHHHYSAHHTHS. The HTH APSES-type domain maps to 233–339; that stretch reads RVTTTLWEDE…PNIQSFLYHP (107 aa). The H-T-H motif DNA-binding region spans 267 to 288; it reads GTKLLNVCGMSRGKRDGILKNE. The segment covering 352–362 has biased composition (low complexity); the sequence is AQERQAQRQRA. Disordered stretches follow at residues 352–456, 474–504, and 538–624; these read AQER…QQQQ, QQAY…LNNS, and SWND…IHHE. Residues 369–391 are compositionally biased toward polar residues; the sequence is PGANGTSQAPPLMRANTTPSNGD. Residues 392–426 show a composition bias toward low complexity; the sequence is TSTFSSGLSSLGSWTGSHDQGHASAPTTAQPSPSS. A compositionally biased stretch (polar residues) spans 427–451; the sequence is MHNGATQMHMSLSNHGTASPTYAQS. Residues 571–587 show a composition bias toward basic and acidic residues; sequence LDGDDLHSPDSSDDRLA. Gly residues predominate over residues 615–624; it reads VGNGSGIHHE.

This sequence belongs to the EFG1/PHD1/stuA family. In terms of processing, phosphorylated but is not a target of cAMP signaling.

The protein resides in the nucleus. Its function is as follows. Transcription factor that regulates asexual reproduction. Binds the StuA-response elements (StRE) with the consensus sequence 5'-(A/T)CGCG(T/A)N(A/C)-3' at the promoters of target genes. Regulates dimorphism, virulence, and the sporulation program. Required for mating, gall induction, and sporogenesis in maize tissue. Regulates expression of the filament-down-regulated gene UM00205 and the teliospore-specific gene ssp1. This is Cell pattern formation-associated protein ust1 (ust1) from Mycosarcoma maydis (Corn smut fungus).